The primary structure comprises 480 residues: uncharacterized protein (480 aa).

Residues 16–46 (CDRCRRRKIRCTGSDIPGQPCLACQKAHADC) constitute a DNA-binding region (zn(2)-C6 fungal-type). The span at 298 to 307 (SFGASVSPKS) shows a compositional bias: low complexity. Positions 298–325 (SFGASVSPKSTPGSNSTGAAVDTNSVHS) are disordered. Over residues 308–325 (TPGSNSTGAAVDTNSVHS) the composition is skewed to polar residues.

The protein localises to the cytoplasm. Its subcellular location is the nucleus. This is an uncharacterized protein from Schizosaccharomyces pombe (strain 972 / ATCC 24843) (Fission yeast).